A 188-amino-acid chain; its full sequence is Putative manganese efflux pump MntP (188 aa).

Transmembrane regions (helical) follow at residues 3–23 (ISATILLAFGMSMDAFAASIG), 41–61 (LIFGAIETLTPLIGWSLGMLA), 62–82 (SQFILEWNHWIAFTLLVFLGG), 106–128 (WILVTTAIATSLDAMAVGVGLAF), 143–163 (ATLIMSTIGMMVGRFIGPLLG), and 168–188 (ILGGIVLIGIGGQILWSHFAG).

It belongs to the MntP (TC 9.B.29) family.

The protein localises to the cell inner membrane. Functionally, probably functions as a manganese efflux pump. In Enterobacter sp. (strain 638), this protein is Putative manganese efflux pump MntP.